Here is a 395-residue protein sequence, read N- to C-terminus: Acetate kinase (395 aa).

Residue asparagine 8 participates in Mg(2+) binding. Lysine 15 is an ATP binding site. Position 90 (arginine 90) interacts with substrate. The active-site Proton donor/acceptor is aspartate 147. Residues 207 to 211 (HLGNG), 284 to 286 (DMR), and 330 to 334 (GIGEN) contribute to the ATP site. Glutamate 383 contacts Mg(2+).

Belongs to the acetokinase family. Homodimer. Mg(2+) is required as a cofactor. Requires Mn(2+) as cofactor.

It localises to the cytoplasm. It catalyses the reaction acetate + ATP = acetyl phosphate + ADP. It participates in metabolic intermediate biosynthesis; acetyl-CoA biosynthesis; acetyl-CoA from acetate: step 1/2. In terms of biological role, catalyzes the formation of acetyl phosphate from acetate and ATP. Can also catalyze the reverse reaction. This is Acetate kinase from Enterococcus faecalis (strain ATCC 700802 / V583).